Here is a 323-residue protein sequence, read N- to C-terminus: NADH-ubiquinone oxidoreductase chain 1 (323 aa).

9 helical membrane passes run L10–I30, P52–L72, I84–I104, V119–A139, V157–V177, V189–E209, Y245–S265, I268–L288, and K302–I322.

It belongs to the complex I subunit 1 family.

Its subcellular location is the mitochondrion inner membrane. The catalysed reaction is a ubiquinone + NADH + 5 H(+)(in) = a ubiquinol + NAD(+) + 4 H(+)(out). Core subunit of the mitochondrial membrane respiratory chain NADH dehydrogenase (Complex I) that is believed to belong to the minimal assembly required for catalysis. Complex I functions in the transfer of electrons from NADH to the respiratory chain. The immediate electron acceptor for the enzyme is believed to be ubiquinone. This Dictyostelium citrinum (Slime mold) protein is NADH-ubiquinone oxidoreductase chain 1 (nad1).